A 400-amino-acid chain; its full sequence is Na(+)/H(+) antiporter NhaA (400 aa).

12 helical membrane-spanning segments follow: residues 26-46 (AGGI…NSPL), 71-91 (LIHW…GMEV), 107-127 (IFPA…YWFI), 137-157 (GWAI…ALLS), 166-186 (IFLL…IALF), 189-209 (HGLS…LILL), 212-232 (FKVS…ASVL), 233-253 (KSGV…PLKG), 273-293 (FVIL…GIDV), 299-319 (PLLL…IFGF), 340-360 (IFAV…LASL), and 373-393 (LSRL…YLFL).

This sequence belongs to the NhaA Na(+)/H(+) (TC 2.A.33) antiporter family.

Its subcellular location is the cell inner membrane. The enzyme catalyses Na(+)(in) + 2 H(+)(out) = Na(+)(out) + 2 H(+)(in). Na(+)/H(+) antiporter that extrudes sodium in exchange for external protons. The polypeptide is Na(+)/H(+) antiporter NhaA (Haemophilus influenzae (strain PittEE)).